A 116-amino-acid polypeptide reads, in one-letter code: Small ribosomal subunit protein eS24 (116 aa).

Residues I81–E116 form a disordered region. The segment covering E96 to E116 has biased composition (acidic residues).

Belongs to the eukaryotic ribosomal protein eS24 family.

The chain is Small ribosomal subunit protein eS24 from Methanopyrus kandleri (strain AV19 / DSM 6324 / JCM 9639 / NBRC 100938).